The primary structure comprises 361 residues: Deoxyribonuclease (361 aa).

A signal peptide spans 1-24; sequence MMHLLRRGAFAILLIVLLPSAALA. Histidine 149 is a catalytic residue.

It belongs to the DNase I family. Requires Mg(2+) as cofactor. It depends on Ca(2+) as a cofactor.

The protein resides in the secreted. DNA nuclease able to digest short and long DNA substrate. Is resistant to ionic strength and thus active at high salt concentration. This Thioalkalivibrio sp. (strain K90mix) protein is Deoxyribonuclease.